Here is a 258-residue protein sequence, read N- to C-terminus: Small ribosomal subunit protein uS2 (258 aa).

A disordered region spans residues 226–258 (QGVSNEEVAAEQNIDLDEKEKSEETEATEATEE).

The protein belongs to the universal ribosomal protein uS2 family.

In Staphylococcus aureus (strain COL), this protein is Small ribosomal subunit protein uS2.